Here is a 56-residue protein sequence, read N- to C-terminus: Small ribosomal subunit protein uS14 (56 aa).

4 residues coordinate Zn(2+): Cys-21, Cys-24, Cys-39, and Cys-42.

It belongs to the universal ribosomal protein uS14 family. Zn(2+) is required as a cofactor.

This is Small ribosomal subunit protein uS14 (rps29A) from Guillardia theta (Cryptophyte).